The chain runs to 573 residues: 3-(3-hydroxy-phenyl)propionate/3-hydroxycinnamic acid hydroxylase (573 aa).

FAD contacts are provided by residues 18 to 47 (DVVIVGAGPVGLTLANILGLQGVRTMIVEE) and 283 to 293 (FRKGRMFLAGD).

Belongs to the PheA/TfdB FAD monooxygenase family. FAD is required as a cofactor.

The catalysed reaction is 3-(3-hydroxyphenyl)propanoate + NADH + O2 + H(+) = 3-(2,3-dihydroxyphenyl)propanoate + NAD(+) + H2O. The enzyme catalyses (2E)-3-(3-hydroxyphenyl)prop-2-enoate + NADH + O2 + H(+) = (2E)-3-(2,3-dihydroxyphenyl)prop-2-enoate + NAD(+) + H2O. It functions in the pathway aromatic compound metabolism; 3-phenylpropanoate degradation. Functionally, catalyzes the insertion of one atom of molecular oxygen into position 2 of the phenyl ring of 3-(3-hydroxyphenyl)propionate (3-HPP) and hydroxycinnamic acid (3HCI). This chain is 3-(3-hydroxy-phenyl)propionate/3-hydroxycinnamic acid hydroxylase, found in Mycobacterium sp. (strain KMS).